The primary structure comprises 406 residues: Argininosuccinate synthase (406 aa).

ATP-binding positions include 10–18 (AYSGGLDTS) and A37. L-citrulline is bound by residues Y88 and S93. Residue G118 participates in ATP binding. 3 residues coordinate L-aspartate: T120, N124, and D125. Residue N124 coordinates L-citrulline. Residues R128, S179, S188, E264, and Y276 each contribute to the L-citrulline site.

Belongs to the argininosuccinate synthase family. Type 1 subfamily. Homotetramer.

Its subcellular location is the cytoplasm. It carries out the reaction L-citrulline + L-aspartate + ATP = 2-(N(omega)-L-arginino)succinate + AMP + diphosphate + H(+). The protein operates within amino-acid biosynthesis; L-arginine biosynthesis; L-arginine from L-ornithine and carbamoyl phosphate: step 2/3. The chain is Argininosuccinate synthase from Dinoroseobacter shibae (strain DSM 16493 / NCIMB 14021 / DFL 12).